We begin with the raw amino-acid sequence, 365 residues long: tRNA/tmRNA (uracil-C(5))-methyltransferase (365 aa).

S-adenosyl-L-methionine is bound by residues Q189, Y217, N222, E238, and D298. C323 acts as the Nucleophile in catalysis. E357 functions as the Proton acceptor in the catalytic mechanism.

Belongs to the class I-like SAM-binding methyltransferase superfamily. RNA M5U methyltransferase family. TrmA subfamily.

The enzyme catalyses uridine(54) in tRNA + S-adenosyl-L-methionine = 5-methyluridine(54) in tRNA + S-adenosyl-L-homocysteine + H(+). It carries out the reaction uridine(341) in tmRNA + S-adenosyl-L-methionine = 5-methyluridine(341) in tmRNA + S-adenosyl-L-homocysteine + H(+). Dual-specificity methyltransferase that catalyzes the formation of 5-methyluridine at position 54 (m5U54) in all tRNAs, and that of position 341 (m5U341) in tmRNA (transfer-mRNA). The sequence is that of tRNA/tmRNA (uracil-C(5))-methyltransferase from Shewanella halifaxensis (strain HAW-EB4).